Consider the following 149-residue polypeptide: Ribose-5-phosphate isomerase B (149 aa).

D-ribulose 5-phosphate is bound at residue 9–10; the sequence is DH. Residue cysteine 66 is the Proton acceptor of the active site. 67–71 contacts D-ribulose 5-phosphate; it reads GTGVG. Histidine 99 serves as the catalytic Proton donor. 4 residues coordinate D-ribulose 5-phosphate: asparagine 100, arginine 110, arginine 133, and arginine 137.

The protein belongs to the LacAB/RpiB family. In terms of assembly, homodimer, and homotetramer.

It carries out the reaction aldehydo-D-ribose 5-phosphate = D-ribulose 5-phosphate. The enzyme catalyses D-allose 6-phosphate = D-allulose 6-phosphate. It participates in carbohydrate degradation; pentose phosphate pathway; D-ribose 5-phosphate from D-ribulose 5-phosphate (non-oxidative stage): step 1/1. Its activity is regulated as follows. Inhibited by iodoacetate and glucose 6-phosphate. Functionally, catalyzes the interconversion of ribulose-5-P and ribose-5-P. It probably also has activity on D-allose 6-phosphate. This Escherichia coli (strain K12) protein is Ribose-5-phosphate isomerase B.